The primary structure comprises 75 residues: Kappa-thalatoxin-Cad2a (75 aa).

The signal sequence occupies residues 1 to 22 (MKFQMIAAVLLIAFCLCVVVTA). Positions 23–40 (RMELQDVEDMKNGSFQKR) are excised as a propeptide. A ShKT domain is found at 43–75 (CIDTIPKSRCTAFQCKNSMKYRLSFCRKTCGTC). Intrachain disulfides connect Cys43–Cys75, Cys52–Cys68, and Cys57–Cys72.

The protein belongs to the sea anemone type 1 potassium channel toxin family. Type 1a subfamily.

It is found in the secreted. It localises to the nematocyst. In terms of biological role, inhibits voltage-gated potassium channels (Kv) with higher potency for Kv1.1/KCNA1 and Kv1.3/KCNA3. The chain is Kappa-thalatoxin-Cad2a from Cryptodendrum adhaesivum (Adhesive sea anemone).